The chain runs to 102 residues: Small ribosomal subunit protein uS10 (102 aa).

Belongs to the universal ribosomal protein uS10 family. Part of the 30S ribosomal subunit.

Functionally, involved in the binding of tRNA to the ribosomes. This chain is Small ribosomal subunit protein uS10, found in Nitrosomonas eutropha (strain DSM 101675 / C91 / Nm57).